Reading from the N-terminus, the 287-residue chain is MTLPASPPRYAVIGNPIAHSRSPQIHAMFSAQTGRPLRYERLLAPVDGFLPTVQAFRESGGLGLNVTVPFKLEAYALAEARLSERARLAGAVNTLSWRDGAWHGCNTDGVGLVNDLLRLGVALAGARVLLVGAGGAARGVLQPLAAAGCARIHIVNRTAARAAELAAAWRAAAPRTGTQVSAGALAQAAEPGGWDVAINATASSLQDAAPDLPGGLYAPDALAYDMMYGARPTAFMRQAEADGAARCADGLGMLVGQAAESFHIWHGVRPDPGPVLLALRTELLAAG.

Residues 20-22 (SRS) and Thr-67 contribute to the shikimate site. Lys-71 serves as the catalytic Proton acceptor. Glu-84 contacts NADP(+). Residues Asn-93 and Asp-108 each coordinate shikimate. Residues 132–136 (GAGGA), 156–161 (NRTAAR), and Met-226 contribute to the NADP(+) site. Residue Tyr-228 participates in shikimate binding. Residue Gly-250 participates in NADP(+) binding.

This sequence belongs to the shikimate dehydrogenase family. In terms of assembly, homodimer.

The enzyme catalyses shikimate + NADP(+) = 3-dehydroshikimate + NADPH + H(+). It participates in metabolic intermediate biosynthesis; chorismate biosynthesis; chorismate from D-erythrose 4-phosphate and phosphoenolpyruvate: step 4/7. Functionally, involved in the biosynthesis of the chorismate, which leads to the biosynthesis of aromatic amino acids. Catalyzes the reversible NADPH linked reduction of 3-dehydroshikimate (DHSA) to yield shikimate (SA). This chain is Shikimate dehydrogenase (NADP(+)), found in Bordetella parapertussis (strain 12822 / ATCC BAA-587 / NCTC 13253).